The following is a 91-amino-acid chain: ATP synthase subunit c 1 (91 aa).

2 helical membrane-spanning segments follow: residues 4 to 24 and 53 to 73; these read FTMC…GTAI and IGLA…LIIL.

The protein belongs to the ATPase C chain family. In terms of assembly, F-type ATPases have 2 components, F(1) - the catalytic core - and F(0) - the membrane proton channel. F(1) has five subunits: alpha(3), beta(3), gamma(1), delta(1), epsilon(1). F(0) has three main subunits: a(1), b(2) and c(10-14). The alpha and beta chains form an alternating ring which encloses part of the gamma chain. F(1) is attached to F(0) by a central stalk formed by the gamma and epsilon chains, while a peripheral stalk is formed by the delta and b chains.

It localises to the cell inner membrane. In terms of biological role, f(1)F(0) ATP synthase produces ATP from ADP in the presence of a proton or sodium gradient. F-type ATPases consist of two structural domains, F(1) containing the extramembraneous catalytic core and F(0) containing the membrane proton channel, linked together by a central stalk and a peripheral stalk. During catalysis, ATP synthesis in the catalytic domain of F(1) is coupled via a rotary mechanism of the central stalk subunits to proton translocation. Key component of the F(0) channel; it plays a direct role in translocation across the membrane. A homomeric c-ring of between 10-14 subunits forms the central stalk rotor element with the F(1) delta and epsilon subunits. The chain is ATP synthase subunit c 1 from Pelobacter propionicus (strain DSM 2379 / NBRC 103807 / OttBd1).